The primary structure comprises 108 residues: MFVGPHRCFLISLIVYTLTVTTSSARLILEDTTVRSEEDSGPSCPVLADEPVGEVMERICDMCHELSSHSRPNMRVECRADCFTTDAFRECLKLFTPRRHTRHLRQKY.

Disulfide bonds link Cys44–Cys82, Cys60–Cys78, and Cys63–Cys91.

It belongs to the arthropod CHH/MIH/GIH/VIH hormone family.

This is an uncharacterized protein from Caenorhabditis elegans.